Here is a 232-residue protein sequence, read N- to C-terminus: MSEVITVKQTNMENIYECEFNDGSFRLCTRNLVPNFNVYGERLIKYEGVEYREWNAFRSKLAGAILKGLKTNPIRKGTKVLYLGAASGTTISHVSDIIELNGKAYGVEFSPRVVRELLLVAQRRPNIFPLLADARFPQSYKSVVENVDVLYVDIAQPDQTDIAIYNAKFFLKVNGDMLLVIKARSIDVTKDPKEIYKTEVEKLENSNFETIQIINLDPYDKDHAIVLSKYKG.

Residues 89-90, 108-109, 133-134, and 153-156 contribute to the S-adenosyl-L-methionine site; these read TT, EF, DA, and DIAQ.

The protein belongs to the methyltransferase superfamily. Fibrillarin family. Interacts with nop5. Component of box C/D small ribonucleoprotein (sRNP) particles that contain rpl7ae, FlpA and nop5, plus a guide RNA. These sRNP particles form homodimers, giving rise to an asymmetric holoenzyme.

Functionally, involved in pre-rRNA and tRNA processing. Utilizes the methyl donor S-adenosyl-L-methionine to catalyze the site-specific 2'-hydroxyl methylation of ribose moieties in rRNA and tRNA. Site specificity is provided by a guide RNA that base pairs with the substrate. Methylation occurs at a characteristic distance from the sequence involved in base pairing with the guide RNA. In Saccharolobus solfataricus (strain ATCC 35092 / DSM 1617 / JCM 11322 / P2) (Sulfolobus solfataricus), this protein is Fibrillarin-like rRNA/tRNA 2'-O-methyltransferase.